The chain runs to 896 residues: Myelin regulatory factor-like protein (896 aa).

The NDT80 DNA-binding region spans G111–I403. The Peptidase S74 domain occupies S449 to I557. The stretch at G541–L573 forms a coiled coil. The chain crosses the membrane as a helical span at residues V622–L638. Positions A648–E658 are enriched in polar residues. A disordered region spans residues A648–T672. The segment covering P659–T672 has biased composition (low complexity).

Belongs to the MRF family.

It is found in the membrane. In Bos taurus (Bovine), this protein is Myelin regulatory factor-like protein (MYRFL).